The sequence spans 360 residues: Uptake hydrogenase small subunit (360 aa).

Residues 1 to 43 constitute a signal peptide (tat-type signal); that stretch reads MVETFYEVMRRQGISRRSFLKYCSLTATSLGLGPSFLPQIAHA. [4Fe-4S] cluster contacts are provided by cysteine 60, cysteine 63, cysteine 158, cysteine 192, histidine 230, cysteine 233, cysteine 258, and cysteine 264. Residues cysteine 273, cysteine 292, and cysteine 295 each coordinate [3Fe-4S] cluster.

The protein belongs to the [NiFe]/[NiFeSe] hydrogenase small subunit family. In terms of assembly, heterodimer of a large and a small subunit. [4Fe-4S] cluster is required as a cofactor. It depends on [3Fe-4S] cluster as a cofactor. Predicted to be exported by the Tat system. The position of the signal peptide cleavage has been experimentally proven.

The protein resides in the cell membrane. It carries out the reaction H2 + A = AH2. Functionally, this enzyme recycles the H(2) produced by nitrogenase to increase the production of ATP and to protect nitrogenase against inhibition or damage by O(2) under carbon- or phosphate-limited conditions. This Cupriavidus necator (strain ATCC 17699 / DSM 428 / KCTC 22496 / NCIMB 10442 / H16 / Stanier 337) (Ralstonia eutropha) protein is Uptake hydrogenase small subunit (hoxK).